We begin with the raw amino-acid sequence, 320 residues long: tRNA uridine(34) hydroxylase (320 aa).

Positions 123–217 constitute a Rhodanese domain; the sequence is EDEDTVILDA…YGKDPETKGQ (95 aa). Cys177 acts as the Cysteine persulfide intermediate in catalysis.

Belongs to the TrhO family.

The enzyme catalyses uridine(34) in tRNA + AH2 + O2 = 5-hydroxyuridine(34) in tRNA + A + H2O. Catalyzes oxygen-dependent 5-hydroxyuridine (ho5U) modification at position 34 in tRNAs. The chain is tRNA uridine(34) hydroxylase from Staphylococcus haemolyticus (strain JCSC1435).